We begin with the raw amino-acid sequence, 27 residues long: Phospholipase A2 1 (27 aa).

Belongs to the phospholipase A2 family. Group I subfamily. Requires Ca(2+) as cofactor. Expressed by the venom gland.

The protein localises to the secreted. It catalyses the reaction a 1,2-diacyl-sn-glycero-3-phosphocholine + H2O = a 1-acyl-sn-glycero-3-phosphocholine + a fatty acid + H(+). In terms of biological role, snake venom phospholipase A2 (PLA2) that inhibits neuromuscular transmission by blocking acetylcholine release from the nerve termini. PLA2 catalyzes the calcium-dependent hydrolysis of the 2-acyl groups in 3-sn-phosphoglycerides. This chain is Phospholipase A2 1, found in Micrurus nigrocinctus (Central American coral snake).